The sequence spans 183 residues: NEDD8-conjugating enzyme Ubc12 (183 aa).

Position 1 is an N-acetylmethionine (M1). Residues 1–29 (MIKLFSLKQQKKEEESAGGTKGSSKKASA) are disordered. Residues 1–57 (MIKLFSLKQQKKEEESAGGTKGSSKKASAAQLRIQKDINELNLPKTCDISFSDPDDL) form an interaction with UBA3 region. Residue K3 is modified to N6-acetyllysine. One can recognise a UBC core domain in the interval 29–173 (AAQLRIQKDI…VQRSMRGGYI (145 aa)). A Phosphoserine modification is found at S50. C111 functions as the Glycyl thioester intermediate in the catalytic mechanism. At R169 the chain carries Asymmetric dimethylarginine; alternate. R169 is subject to Omega-N-methylarginine; alternate.

Belongs to the ubiquitin-conjugating enzyme family. UBC12 subfamily. In terms of assembly, interacts with UBA3 and RBX1. Interacts (N-terminally acetylated form) with (via DCUN1 domain) DCUN1D1, DCUN1D2, DCUN1D3, DCUN1D4 and DCUN1D5. Post-translationally, the acetylation of Met-1 increases affinity for DCUN1D1 by about 2 orders of magnitude and is crucial for NEDD8 transfer to cullins.

The catalysed reaction is [E1 NEDD8-activating enzyme]-S-[NEDD8 protein]-yl-L-cysteine + [E2 NEDD8-conjugating enzyme]-L-cysteine = [E1 NEDD8-activating enzyme]-L-cysteine + [E2 NEDD8-conjugating enzyme]-S-[NEDD8-protein]-yl-L-cysteine.. The protein operates within protein modification; protein neddylation. In terms of biological role, accepts the ubiquitin-like protein NEDD8 from the UBA3-NAE1 E1 complex and catalyzes its covalent attachment to other proteins. The specific interaction with the E3 ubiquitin ligase RBX1, but not RBX2, suggests that the RBX1-UBE2M complex neddylates specific target proteins, such as CUL1, CUL2, CUL3 and CUL4. Involved in cell proliferation. This is NEDD8-conjugating enzyme Ubc12 (Ube2m) from Mus musculus (Mouse).